A 425-amino-acid polypeptide reads, in one-letter code: Histidine--tRNA ligase (425 aa).

Belongs to the class-II aminoacyl-tRNA synthetase family. Homodimer.

Its subcellular location is the cytoplasm. The catalysed reaction is tRNA(His) + L-histidine + ATP = L-histidyl-tRNA(His) + AMP + diphosphate + H(+). This is Histidine--tRNA ligase from Erwinia tasmaniensis (strain DSM 17950 / CFBP 7177 / CIP 109463 / NCPPB 4357 / Et1/99).